The following is a 430-amino-acid chain: Histidine--tRNA ligase (430 aa).

It belongs to the class-II aminoacyl-tRNA synthetase family.

Its subcellular location is the cytoplasm. It catalyses the reaction tRNA(His) + L-histidine + ATP = L-histidyl-tRNA(His) + AMP + diphosphate + H(+). The chain is Histidine--tRNA ligase from Metallosphaera sedula (strain ATCC 51363 / DSM 5348 / JCM 9185 / NBRC 15509 / TH2).